Reading from the N-terminus, the 465-residue chain is tRNA modification GTPase MnmE (465 aa).

Positions 21, 85, and 124 each coordinate (6S)-5-formyl-5,6,7,8-tetrahydrofolate. Residues 220-387 (GVPVAIIGET…LQQRLVAAAH (168 aa)) enclose the TrmE-type G domain. Asn-230 provides a ligand contact to K(+). GTP contacts are provided by residues 230–235 (NAGKST), 249–255 (SDIHGTT), and 274–277 (DTAG). Ser-234 contacts Mg(2+). K(+)-binding residues include Ser-249, Ile-251, and Thr-254. Position 255 (Thr-255) interacts with Mg(2+). Lys-465 is a (6S)-5-formyl-5,6,7,8-tetrahydrofolate binding site.

Belongs to the TRAFAC class TrmE-Era-EngA-EngB-Septin-like GTPase superfamily. TrmE GTPase family. As to quaternary structure, homodimer. Heterotetramer of two MnmE and two MnmG subunits. K(+) serves as cofactor.

The protein localises to the cytoplasm. Its function is as follows. Exhibits a very high intrinsic GTPase hydrolysis rate. Involved in the addition of a carboxymethylaminomethyl (cmnm) group at the wobble position (U34) of certain tRNAs, forming tRNA-cmnm(5)s(2)U34. The chain is tRNA modification GTPase MnmE from Bacteroides fragilis (strain ATCC 25285 / DSM 2151 / CCUG 4856 / JCM 11019 / LMG 10263 / NCTC 9343 / Onslow / VPI 2553 / EN-2).